The following is a 211-amino-acid chain: Uracil phosphoribosyltransferase (211 aa).

Residues arginine 79, arginine 104, and 131–139 (DPMLATGGS) contribute to the 5-phospho-alpha-D-ribose 1-diphosphate site. Uracil-binding positions include isoleucine 196 and 201 to 203 (GDA). Residue aspartate 202 participates in 5-phospho-alpha-D-ribose 1-diphosphate binding.

Belongs to the UPRTase family. Requires Mg(2+) as cofactor.

It carries out the reaction UMP + diphosphate = 5-phospho-alpha-D-ribose 1-diphosphate + uracil. It participates in pyrimidine metabolism; UMP biosynthesis via salvage pathway; UMP from uracil: step 1/1. Its activity is regulated as follows. Allosterically activated by GTP. In terms of biological role, catalyzes the conversion of uracil and 5-phospho-alpha-D-ribose 1-diphosphate (PRPP) to UMP and diphosphate. The chain is Uracil phosphoribosyltransferase from Lactococcus lactis subsp. lactis (strain IL1403) (Streptococcus lactis).